A 537-amino-acid polypeptide reads, in one-letter code: Efflux pump ustT (537 aa).

The segment covering 1-25 (MAKEAQSLHELDNMKEKEVDQEKKA) has biased composition (basic and acidic residues). Residues 1–50 (MAKEAQSLHELDNMKEKEVDQEKKAPTSVGDQEEHDDPKKQASHSQNVSE) form a disordered region. N-linked (GlcNAc...) asparagine glycosylation is present at N47. The next 8 helical transmembrane spans lie at 71 to 91 (PLAM…VSLL), 104 to 124 (WVYM…AGAM), 137 to 157 (GIGL…NAPL), 162 to 182 (MFLG…PLIG), 193 to 213 (WCFI…FFFV), 236 to 256 (LGSA…QWAG), 266 to 286 (IILL…SQML), and 304 to 324 (FGSF…TYWI). A glycan (N-linked (GlcNAc...) asparagine) is linked at N333. Helical transmembrane passes span 339-359 (AGIR…MGGG), 363-383 (LIGY…VGAG), 397-417 (WIGY…QASL), and 430-450 (TAIS…VCIG). N501 carries N-linked (GlcNAc...) asparagine glycosylation. A helical transmembrane segment spans residues 507–527 (TFYVALAAGITSMLSAFLVQW).

The protein belongs to the major facilitator superfamily. TCR/Tet family.

It is found in the cell membrane. In terms of biological role, efflux pump; part of the gene cluster that mediates the biosynthesis of ustilaginoidins, dimeric gamma-naphthopyrones isolated from different fungal species. The chain is Efflux pump ustT from Ustilaginoidea virens (Rice false smut fungus).